The following is a 120-amino-acid chain: Transcription elongation factor SPT4 (120 aa).

Residues 1-39 form an interaction with spt-5 region; that stretch reads MSASVPADLRNLRACLLCSLVKSVESFQKEGCENCEDVL. The C4-type zinc-finger motif lies at 15 to 35; sequence CLLCSLVKSVESFQKEGCENC.

Belongs to the SPT4 family. In terms of assembly, interacts with spt-5 to form DSIF. DSIF interacts with RNA polymerase II and with the positive transcription elongation factor b complex (P-TEFb complex), which is composed of cdk-9 and cyclin-T (cit-1.1 or cit-1.2).

It localises to the nucleus. Functionally, may function as a component of the DRB sensitivity-inducing factor complex (DSIF complex), which regulates transcription elongation by RNA polymerase II. DSIF may enhance transcriptional pausing at sites proximal to the promoter, which may in turn facilitate the assembly of an elongation competent RNA polymerase II complex. This Caenorhabditis elegans protein is Transcription elongation factor SPT4 (spt-4).